We begin with the raw amino-acid sequence, 282 residues long: 4-diphosphocytidyl-2-C-methyl-D-erythritol kinase (282 aa).

Residue Lys-9 is part of the active site. 98-108 contacts ATP; that stretch reads PMGGGLGGGSS. Asp-140 is an active-site residue.

This sequence belongs to the GHMP kinase family. IspE subfamily. As to quaternary structure, homodimer.

The catalysed reaction is 4-CDP-2-C-methyl-D-erythritol + ATP = 4-CDP-2-C-methyl-D-erythritol 2-phosphate + ADP + H(+). The protein operates within isoprenoid biosynthesis; isopentenyl diphosphate biosynthesis via DXP pathway; isopentenyl diphosphate from 1-deoxy-D-xylulose 5-phosphate: step 3/6. Its function is as follows. Catalyzes the phosphorylation of the position 2 hydroxy group of 4-diphosphocytidyl-2C-methyl-D-erythritol. The sequence is that of 4-diphosphocytidyl-2-C-methyl-D-erythritol kinase from Salmonella paratyphi A (strain ATCC 9150 / SARB42).